A 203-amino-acid chain; its full sequence is 5-formyltetrahydrofolate cyclo-ligase (203 aa).

An N-acetylalanine modification is found at alanine 2. ATP-binding positions include lysine 10 to arginine 14 and arginine 14. Residues leucine 56, glutamate 61, and arginine 148–tyrosine 152 each bind substrate. ATP is bound at residue arginine 145 to tyrosine 153. Positions 154 and 189 each coordinate Mg(2+).

It belongs to the 5-formyltetrahydrofolate cyclo-ligase family. As to quaternary structure, monomer. It depends on Mg(2+) as a cofactor.

The protein localises to the cytoplasm. The enzyme catalyses (6S)-5-formyl-5,6,7,8-tetrahydrofolate + ATP = (6R)-5,10-methenyltetrahydrofolate + ADP + phosphate. Functionally, contributes to tetrahydrofolate metabolism. Helps regulate carbon flow through the folate-dependent one-carbon metabolic network that supplies carbon for the biosynthesis of purines, thymidine and amino acids. Catalyzes the irreversible conversion of 5-formyltetrahydrofolate (5-FTHF) to yield 5,10-methenyltetrahydrofolate. In Homo sapiens (Human), this protein is 5-formyltetrahydrofolate cyclo-ligase (MTHFS).